We begin with the raw amino-acid sequence, 304 residues long: Quinolinate synthase (304 aa).

Iminosuccinate contacts are provided by His24 and Ser41. Cys86 contacts [4Fe-4S] cluster. Residues 112-114 (YVN) and Ser129 contribute to the iminosuccinate site. Cys171 contributes to the [4Fe-4S] cluster binding site. Residues 197-199 (HPE) and Thr214 contribute to the iminosuccinate site. Cys259 contacts [4Fe-4S] cluster.

It belongs to the quinolinate synthase family. Type 2 subfamily. The cofactor is [4Fe-4S] cluster.

The protein resides in the cytoplasm. It catalyses the reaction iminosuccinate + dihydroxyacetone phosphate = quinolinate + phosphate + 2 H2O + H(+). It functions in the pathway cofactor biosynthesis; NAD(+) biosynthesis; quinolinate from iminoaspartate: step 1/1. Functionally, catalyzes the condensation of iminoaspartate with dihydroxyacetone phosphate to form quinolinate. This is Quinolinate synthase from Geotalea uraniireducens (strain Rf4) (Geobacter uraniireducens).